Consider the following 419-residue polypeptide: Squalene synthase R6 (419 aa).

The chain crosses the membrane as a helical span at residues 397 to 417 (TMYLVVLLLGILGVAAAVLMA).

It belongs to the phytoene/squalene synthase family. Mg(2+) is required as a cofactor.

The protein localises to the membrane. It carries out the reaction 2 (2E,6E)-farnesyl diphosphate + NADPH + H(+) = squalene + 2 diphosphate + NADP(+). It catalyses the reaction 2 (2E,6E)-farnesyl diphosphate + NADH + H(+) = squalene + 2 diphosphate + NAD(+). It functions in the pathway terpene metabolism; lanosterol biosynthesis; lanosterol from farnesyl diphosphate: step 1/3. In terms of biological role, squalene synthase; part of the gene cluster that mediates the biosynthesis of squalestatin S1 (SQS1, also known as zaragozic acid A), a heavily oxidized fungal polyketide that offers potent cholesterol lowering activity by targeting squalene synthase (SS). Catalyzes the condensation of 2 two farnesyl pyrophosphate moieties to form squalene. The presence of a gene encoding a squalene synthase supports the identification of the cluster as being responsible for SQS1 production and suggests a likely mechanism for self-resistance. The chain is Squalene synthase R6 from Phoma sp. (strain ATCC 20986 / MF5453).